Consider the following 415-residue polypeptide: Mitogen-activated protein kinase mpkC (415 aa).

Residues 20–299 (YANLQPVGLG…AEQGLMHPWM (280 aa)) form the Protein kinase domain. Residues 26-34 (VGLGTAGVV) and Lys49 each bind ATP. Catalysis depends on Asp141, which acts as the Proton acceptor. The residue at position 171 (Thr171) is a Phosphothreonine. Positions 171-173 (TGY) match the TXY motif. Tyr173 carries the post-translational modification Phosphotyrosine.

This sequence belongs to the protein kinase superfamily. Ser/Thr protein kinase family. MAP kinase subfamily. HOG1 sub-subfamily. Mg(2+) is required as a cofactor. Dually phosphorylated on Thr-171 and Tyr-173, which activates the enzyme.

It carries out the reaction L-seryl-[protein] + ATP = O-phospho-L-seryl-[protein] + ADP + H(+). It catalyses the reaction L-threonyl-[protein] + ATP = O-phospho-L-threonyl-[protein] + ADP + H(+). With respect to regulation, activated by tyrosine and threonine phosphorylation. Mitogen-activated protein kinase required for growth on media where sorbitol or mannitol is the sole carbon source. This is Mitogen-activated protein kinase mpkC (mpkC) from Emericella nidulans (strain FGSC A4 / ATCC 38163 / CBS 112.46 / NRRL 194 / M139) (Aspergillus nidulans).